Consider the following 503-residue polypeptide: Cytochrome P450 monooxygenase lnbC (503 aa).

A helical membrane pass occupies residues 14–34; it reads VVLLLSSVWIAVHLVLAAYNV. 2 N-linked (GlcNAc...) asparagine glycosylation sites follow: asparagine 94 and asparagine 169. Position 446 (cysteine 446) interacts with heme.

Belongs to the cytochrome P450 family. The cofactor is heme.

Its subcellular location is the membrane. The protein operates within secondary metabolite biosynthesis. Cytochrome P450 monooxygenase; part of the lnb gene cluster that mediates the biosynthesis of diastereomeric piperazines. Lna and lnb clusters encode sets of enzymes that produce overlapping sets of previously undescribed metabolites such as piperazinomycin-like metabolites or morpholine. The lna and lnb biosynthetic pathways appear to be part of a signaling network that controls the formation of sclerotia, a resilient overwintering structure. One primary function of the non-canonical nonribosomal peptide synthetases lnaA and lnbA consists in the reduction of L-tyrosine. The presence in the clusters of tailoring enzymes such as the oxidoreductases lnaB, lnbB, lnaE or lnbE, as well as of the cytochrome P450 monooxygenases lnaC, lnaD, or lnbC, might explain formation of various diastereomeric piperazines. The protein is Cytochrome P450 monooxygenase lnbC of Aspergillus flavus (strain ATCC 200026 / FGSC A1120 / IAM 13836 / NRRL 3357 / JCM 12722 / SRRC 167).